The primary structure comprises 425 residues: Putative TRAP transporter large permease protein HI_1029 (425 aa).

Transmembrane regions (helical) follow at residues valine 3–alanine 23, leucine 24–alanine 44, phenylalanine 54–leucine 74, leucine 93–alanine 113, leucine 139–phenylalanine 159, lysine 169–tryptophan 189, valine 217–proline 237, glycine 241–leucine 261, threonine 275–alanine 295, proline 312–leucine 332, proline 334–proline 354, valine 355–glycine 375, and tyrosine 399–methionine 419.

The protein belongs to the TRAP transporter large permease family.

The protein resides in the cell inner membrane. The polypeptide is Putative TRAP transporter large permease protein HI_1029 (Haemophilus influenzae (strain ATCC 51907 / DSM 11121 / KW20 / Rd)).